The chain runs to 208 residues: FMN-dependent NADH:quinone oxidoreductase 2 (208 aa).

FMN is bound at residue 17-19 (SVS).

It belongs to the azoreductase type 1 family. As to quaternary structure, homodimer. Requires FMN as cofactor.

The catalysed reaction is 2 a quinone + NADH + H(+) = 2 a 1,4-benzosemiquinone + NAD(+). It catalyses the reaction N,N-dimethyl-1,4-phenylenediamine + anthranilate + 2 NAD(+) = 2-(4-dimethylaminophenyl)diazenylbenzoate + 2 NADH + 2 H(+). Functionally, quinone reductase that provides resistance to thiol-specific stress caused by electrophilic quinones. Its function is as follows. Also exhibits azoreductase activity. Catalyzes the reductive cleavage of the azo bond in aromatic azo compounds to the corresponding amines. This chain is FMN-dependent NADH:quinone oxidoreductase 2, found in Halalkalibacterium halodurans (strain ATCC BAA-125 / DSM 18197 / FERM 7344 / JCM 9153 / C-125) (Bacillus halodurans).